Reading from the N-terminus, the 250-residue chain is MSGHSKWATTKHKKAANDAKRGKEFAKLIKNIEVAARTGGGDPSANPTLDDMIKKAKKASVPNDNIERARKRGSGEEAGGADWQTIMYEGYGPNGVAVLIECLTDNRNRAASEVRTAMSKNGGNMAENGAVSYMFKRRGFVLVNKGELTEDDVLMAVLDAGAEEVSDAGDKFEILSAPGDVAAIRDALAEAEIEVEDSDSDFRADVLVPLEANDARKIFRLIDALEESDDVQNVYTNMDLSDEVLAELEA.

The tract at residues 1–22 (MSGHSKWATTKHKKAANDAKRG) is disordered.

This sequence belongs to the TACO1 family.

Its subcellular location is the cytoplasm. This chain is Probable transcriptional regulatory protein DIP1378, found in Corynebacterium diphtheriae (strain ATCC 700971 / NCTC 13129 / Biotype gravis).